A 725-amino-acid polypeptide reads, in one-letter code: N-alpha-acetyltransferase 35, NatC auxiliary subunit (725 aa).

Ser-187 is modified (phosphoserine). Residues 548–573 (ERIMEEQQKGRSSKKTKKKKKVRPLS) are disordered. Basic residues predominate over residues 558–571 (RSSKKTKKKKKVRP).

Belongs to the MAK10 family. Component of the N-terminal acetyltransferase C (NatC) complex, which is composed of NAA35, NAA38 and NAA30.

It localises to the cytoplasm. Its function is as follows. Auxillary component of the N-terminal acetyltransferase C (NatC) complex which catalyzes acetylation of N-terminal methionine residues. N-terminal acetylation protects proteins from ubiquitination and degradation by the N-end rule pathway. Involved in regulation of apoptosis and proliferation of smooth muscle cells. The protein is N-alpha-acetyltransferase 35, NatC auxiliary subunit (NAA35) of Homo sapiens (Human).